Consider the following 339-residue polypeptide: Phosphate acyltransferase (339 aa).

This sequence belongs to the PlsX family. Homodimer. Probably interacts with PlsY.

It is found in the cytoplasm. The enzyme catalyses a fatty acyl-[ACP] + phosphate = an acyl phosphate + holo-[ACP]. It functions in the pathway lipid metabolism; phospholipid metabolism. Its function is as follows. Catalyzes the reversible formation of acyl-phosphate (acyl-PO(4)) from acyl-[acyl-carrier-protein] (acyl-ACP). This enzyme utilizes acyl-ACP as fatty acyl donor, but not acyl-CoA. The sequence is that of Phosphate acyltransferase from Moorella thermoacetica (strain ATCC 39073 / JCM 9320).